A 245-amino-acid polypeptide reads, in one-letter code: 14-3-3 protein zeta/delta (245 aa).

N-acetylmethionine is present on Met-1. Lys-3 carries the N6-acetyllysine modification. The residue at position 58 (Ser-58) is a Phosphoserine; by PKA. Lys-68 carries the N6-acetyllysine modification. Phosphoserine occurs at positions 184, 207, and 210. The residue at position 232 (Thr-232) is a Phosphothreonine; by CK1.

Belongs to the 14-3-3 family. In terms of assembly, homodimer. Heterodimerizes with YWHAE. Homo- and heterodimerization is inhibited by phosphorylation on Ser-58. Interacts with FOXO4, NOXA1, SSH1 ARHGEF2, CDK16 and BSPRY. Interacts with WEE1 (C-terminal). Interacts with MLF1 (phosphorylated form); the interaction retains it in the cytoplasm. Interacts with BAX; the interaction occurs in the cytoplasm. Under stress conditions, MAPK8-mediated phosphorylation releases BAX to mitochondria. Interacts with TP53; the interaction enhances p53 transcriptional activity. The Ser-58 phosphorylated form inhibits this interaction and p53 transcriptional activity. Interacts with ABL1 (phosphorylated form); the interaction retains ABL1 in the cytoplasm. Interacts with PKA-phosphorylated AANAT; the interaction modulates AANAT enzymatic activity by increasing affinity for arylalkylamines and acetyl-CoA and protecting the enzyme from dephosphorylation and proteasomal degradation. It may also prevent thiol-dependent inactivation. Interacts with AKT1; the interaction phosphorylates YWHAZ and modulates dimerization. Interacts with GAB2. Interacts with BCL2L11, SAMSN1 and TLK2. Interacts with phosphorylated RAF1; the interaction is inhibited when YWHAZ is phosphorylated on Thr-232. Interacts with Thr-phosphorylated ITGB2. Interacts with the 'Thr-369' phosphorylated form of DAPK2. Interacts with PI4KB, TBC1D22A and TBC1D22B. Interacts with ZFP36L1 (via phosphorylated form); this interaction occurs in a p38 MAPK- and AKT-signaling pathways. Interacts with SLITRK1. Interacts with AK5, LDB1, MADD, MARK3, PDE1A and SMARCB1. Interacts with YWHAZ. Interacts with MEFV. Interacts with ADAM22 (via C-terminus). Post-translationally, the delta, brain-specific form differs from the zeta form in being phosphorylated. Phosphorylation on Ser-184 by MAPK8; promotes dissociation of BAX and translocation of BAX to mitochondria. Phosphorylation on Thr-232; inhibits binding of RAF1. Phosphorylated on Ser-58 by PKA and protein kinase C delta type catalytic subunit in a sphingosine-dependent fashion. Phosphorylation on Ser-58 by PKA; disrupts homodimerization and heterodimerization with YHAE and TP53.

It is found in the cytoplasm. The protein resides in the melanosome. Adapter protein implicated in the regulation of a large spectrum of both general and specialized signaling pathways. Binds to a large number of partners, usually by recognition of a phosphoserine or phosphothreonine motif. Binding generally results in the modulation of the activity of the binding partner. Promotes cytosolic retention and inactivation of TFEB transcription factor by binding to phosphorylated TFEB. Induces ARHGEF7 activity on RAC1 as well as lamellipodia and membrane ruffle formation. In neurons, regulates spine maturation through the modulation of ARHGEF7 activity. This chain is 14-3-3 protein zeta/delta (YWHAZ), found in Bos taurus (Bovine).